A 1006-amino-acid chain; its full sequence is DNA ligase 4 (1006 aa).

The interval 1–36 is disordered; that stretch reads MDSDDDYNGPADTNPRLEDEESDLDEKYPNRPRNHS. Residues Glu-318, Lys-320, Leu-321, Arg-325, Glu-387, Phe-427, Glu-487, Lys-492, Lys-509, and Lys-511 each contribute to the ATP site. Lys-320 functions as the N6-AMP-lysine intermediate in the catalytic mechanism. Glu-387 is a Mg(2+) binding site. Glu-487 serves as a coordination point for Mg(2+). 2 BRCT domains span residues 718-811 and 890-1002; these read PSGN…PDSL and PSGW…GFQP.

This sequence belongs to the ATP-dependent DNA ligase family. Mg(2+) serves as cofactor.

Its subcellular location is the nucleus. It carries out the reaction ATP + (deoxyribonucleotide)n-3'-hydroxyl + 5'-phospho-(deoxyribonucleotide)m = (deoxyribonucleotide)n+m + AMP + diphosphate.. Functionally, DNA ligase involved in DNA non-homologous end joining (NHEJ); required for double-strand break (DSB) repair. The chain is DNA ligase 4 (lig4) from Aspergillus oryzae (strain ATCC 42149 / RIB 40) (Yellow koji mold).